The sequence spans 454 residues: MKYKTVKSIPLFLLGSIVFTACSTPQSTFHLPVQTTVSAIKKDISGKTATAVKAASSSSSTTTSNDDNNQKGYFLETNRSTGTYDPNNSTRLIKLGESGDFHAADQNKPEEALFERLYGGIASLLNFRIIKPALTYWNTVTPSLKAIGKSSNLITFSQDIDETELQRALANNLIVADDGNNNFWFGLKSLSFNSAKLTDNAQTQMAQKTTQAVTLKSQAQMSSTNTKNTNKKIDLRDKITLSSTMNTQGSGDNKNPSSGLIQKLVSVENIEAEFSFVKTGFNGNEIKFGDFVTENSPTTTQLKQVWKKKWGTELKKTNYKLQLNNFSLLLTYTPEVNKVEKGNNGDSNKGTIATPNGFSFLYPANLNETPSSSSSYWTNVTDLTKAATDTENTNLLNDLQKSQEQVNQFVAAITQNHLDVSEAALTKKQFGSLSISDFFKAIFKENGKDTKAKS.

Residues 1–21 (MKYKTVKSIPLFLLGSIVFTA) form the signal peptide. C22 carries the N-palmitoyl cysteine lipid modification. The S-diacylglycerol cysteine moiety is linked to residue C22. Residues 55–64 (ASSSSSTTTS) are compositionally biased toward low complexity. The tract at residues 55-87 (ASSSSSTTTSNDDNNQKGYFLETNRSTGTYDPN) is disordered. Over residues 65–87 (NDDNNQKGYFLETNRSTGTYDPN) the composition is skewed to polar residues.

The protein localises to the cell membrane. This is an uncharacterized protein from Mycoplasma pneumoniae (strain ATCC 29342 / M129 / Subtype 1) (Mycoplasmoides pneumoniae).